Here is a 148-residue protein sequence, read N- to C-terminus: MDNFIQELQRLFPDLEVREGVDVPALVVPADQLLALMTELKEKRGFNFLADLTAVDYPEDERIEMVYHLLSVPGMAEIRVKVNLDRQHPEVPSLTALWPAANVQEREAFDLMGVKFPGHPDLKRILCPDDFVGHPLRKDFRLQTEGGE.

The protein belongs to the complex I 30 kDa subunit family. In terms of assembly, NDH-1 is composed of 14 different subunits. Subunits NuoB, C, D, E, F, and G constitute the peripheral sector of the complex.

It is found in the cell membrane. The enzyme catalyses a quinone + NADH + 5 H(+)(in) = a quinol + NAD(+) + 4 H(+)(out). Its function is as follows. NDH-1 shuttles electrons from NADH, via FMN and iron-sulfur (Fe-S) centers, to quinones in the respiratory chain. The immediate electron acceptor for the enzyme in this species is believed to be a menaquinone. Couples the redox reaction to proton translocation (for every two electrons transferred, four hydrogen ions are translocated across the cytoplasmic membrane), and thus conserves the redox energy in a proton gradient. The chain is NADH-quinone oxidoreductase subunit C from Moorella thermoacetica (strain ATCC 39073 / JCM 9320).